We begin with the raw amino-acid sequence, 251 residues long: MCSAPNGRKNRPRSAANIFQIGKSSVRDPERRESTESARRAQRAMDDCRTTVQEFNTLVALHREQVISIGENTTDCPSLRAQMHKTRVKGCAVAQAAYQNLIAISGPEDGEIHPEICRLFIQLQCCLEMYITEMLKSMCLLGVLQLHRKGNDMCPELNMDCRVDESSDVPMLEDRSSSPMDFPQDSWVVCADIENIESDMREMRNLLSKLRETMPLPLKNQDDSSLLNLTPYPLVRQRKRRFSGLCCLVSG.

A disordered region spans residues 1-43 (MCSAPNGRKNRPRSAANIFQIGKSSVRDPERRESTESARRAQR). Positions 25–43 (SVRDPERRESTESARRAQR) are enriched in basic and acidic residues. Residues Cys-246 and Cys-247 are each lipidated (S-palmitoyl cysteine).

It belongs to the RGS7BP/RGS9BP family. Palmitoylated. Undergoes rapid palmitoylation turnover. Palmitoylation regulates the cell membrane and nuclear shuttling and the regulation of GPCR signaling. Upon depalmitoylation, it is targeted from the plasma membrane into the nucleus. GPCR signaling inhibits depalmitoylation and promotes localization to the plasma membrane.

The protein resides in the nucleus. It localises to the cytoplasm. It is found in the cell membrane. Functionally, regulator of G protein-coupled receptor (GPCR) signaling. Regulatory subunit of the R7-Gbeta5 complexes that acts by controlling the subcellular location of the R7-Gbeta5 complexes. When palmitoylated, it targets the R7-Gbeta5 complexes to the plasma membrane, leading to inhibit G protein alpha subunits. When it is unpalmitoylated, the R7-Gbeta5 complexes undergo a nuclear/cytoplasmic shuttling. The sequence is that of Regulator of G-protein signaling 7-binding protein B (rgs7bpb) from Danio rerio (Zebrafish).